The following is a 522-amino-acid chain: 2-isopropylmalate synthase (522 aa).

Positions 5 to 267 (VIIFDTTLRD…HTRINHQEIY (263 aa)) constitute a Pyruvate carboxyltransferase domain. Residues Asp-14, His-202, His-204, and Asn-238 each coordinate Mn(2+). Residues 392-522 (RLDTFNVQSG…SQVKDQKETV (131 aa)) form a regulatory domain region.

It belongs to the alpha-IPM synthase/homocitrate synthase family. LeuA type 1 subfamily. Homodimer. Requires Mn(2+) as cofactor.

The protein resides in the cytoplasm. It catalyses the reaction 3-methyl-2-oxobutanoate + acetyl-CoA + H2O = (2S)-2-isopropylmalate + CoA + H(+). Its pathway is amino-acid biosynthesis; L-leucine biosynthesis; L-leucine from 3-methyl-2-oxobutanoate: step 1/4. Functionally, catalyzes the condensation of the acetyl group of acetyl-CoA with 3-methyl-2-oxobutanoate (2-ketoisovalerate) to form 3-carboxy-3-hydroxy-4-methylpentanoate (2-isopropylmalate). This is 2-isopropylmalate synthase from Erwinia tasmaniensis (strain DSM 17950 / CFBP 7177 / CIP 109463 / NCPPB 4357 / Et1/99).